We begin with the raw amino-acid sequence, 278 residues long: Heat stress transcription factor C-2b (278 aa).

The span at 105–114 (AAGGGGGGGG) shows a compositional bias: gly residues. The tract at residues 105 to 132 (AAGGGGGGGGGKRRDASADGGGGGGDED) is disordered. Positions 143–179 (LKQEQRTIDDRVAAMWRRVQETERRPKQMLAFLLKVV) are hydrophobic repeat HR-A/B. The short motif at 219 to 222 (KRAR) is the Nuclear localization signal element.

The protein belongs to the HSF family. Class C subfamily. As to quaternary structure, homotrimer. Exhibits temperature-dependent phosphorylation.

It localises to the nucleus. Functionally, transcriptional regulator that specifically binds DNA of heat shock promoter elements (HSE). The sequence is that of Heat stress transcription factor C-2b (HSFC2B) from Oryza sativa subsp. japonica (Rice).